The chain runs to 88 residues: YcgL domain-containing protein HI_1446 (88 aa).

The 85-residue stretch at 1 to 85 (MLCAIYKSKK…QDDGLFNSLS (85 aa)) folds into the YcgL domain.

The protein is YcgL domain-containing protein HI_1446 of Haemophilus influenzae (strain ATCC 51907 / DSM 11121 / KW20 / Rd).